Consider the following 346-residue polypeptide: Quinolinate synthase (346 aa).

Residues H47 and S68 each contribute to the iminosuccinate site. C113 serves as a coordination point for [4Fe-4S] cluster. Iminosuccinate-binding positions include 139-141 and S156; that span reads YAN. Residue C200 coordinates [4Fe-4S] cluster. Iminosuccinate is bound by residues 226 to 228 and T243; that span reads HPE. C297 is a binding site for [4Fe-4S] cluster.

Belongs to the quinolinate synthase family. Type 1 subfamily. [4Fe-4S] cluster serves as cofactor.

Its subcellular location is the cytoplasm. The enzyme catalyses iminosuccinate + dihydroxyacetone phosphate = quinolinate + phosphate + 2 H2O + H(+). It functions in the pathway cofactor biosynthesis; NAD(+) biosynthesis; quinolinate from iminoaspartate: step 1/1. Its function is as follows. Catalyzes the condensation of iminoaspartate with dihydroxyacetone phosphate to form quinolinate. The polypeptide is Quinolinate synthase (Photorhabdus laumondii subsp. laumondii (strain DSM 15139 / CIP 105565 / TT01) (Photorhabdus luminescens subsp. laumondii)).